Reading from the N-terminus, the 476-residue chain is Aspartyl/glutamyl-tRNA(Asn/Gln) amidotransferase subunit B (476 aa).

It belongs to the GatB/GatE family. GatB subfamily. In terms of assembly, heterotrimer of A, B and C subunits.

It carries out the reaction L-glutamyl-tRNA(Gln) + L-glutamine + ATP + H2O = L-glutaminyl-tRNA(Gln) + L-glutamate + ADP + phosphate + H(+). The enzyme catalyses L-aspartyl-tRNA(Asn) + L-glutamine + ATP + H2O = L-asparaginyl-tRNA(Asn) + L-glutamate + ADP + phosphate + 2 H(+). Its function is as follows. Allows the formation of correctly charged Asn-tRNA(Asn) or Gln-tRNA(Gln) through the transamidation of misacylated Asp-tRNA(Asn) or Glu-tRNA(Gln) in organisms which lack either or both of asparaginyl-tRNA or glutaminyl-tRNA synthetases. The reaction takes place in the presence of glutamine and ATP through an activated phospho-Asp-tRNA(Asn) or phospho-Glu-tRNA(Gln). This chain is Aspartyl/glutamyl-tRNA(Asn/Gln) amidotransferase subunit B, found in Lactobacillus johnsonii (strain CNCM I-12250 / La1 / NCC 533).